The chain runs to 61 residues: Large ribosomal subunit protein eL24 (61 aa).

4 residues coordinate Zn(2+): C7, C10, C33, and C37. The C4-type zinc finger occupies C7 to C37.

This sequence belongs to the eukaryotic ribosomal protein eL24 family. As to quaternary structure, part of the 50S ribosomal subunit. Forms a cluster with proteins L3 and L14. The cofactor is Zn(2+).

Its function is as follows. Binds to the 23S rRNA. The protein is Large ribosomal subunit protein eL24 of Sulfurisphaera tokodaii (strain DSM 16993 / JCM 10545 / NBRC 100140 / 7) (Sulfolobus tokodaii).